A 365-amino-acid polypeptide reads, in one-letter code: tRNA/tmRNA (uracil-C(5))-methyltransferase (365 aa).

Positions 189, 217, 222, 238, and 298 each coordinate S-adenosyl-L-methionine. C323 acts as the Nucleophile in catalysis. The active-site Proton acceptor is the E357.

Belongs to the class I-like SAM-binding methyltransferase superfamily. RNA M5U methyltransferase family. TrmA subfamily.

It carries out the reaction uridine(54) in tRNA + S-adenosyl-L-methionine = 5-methyluridine(54) in tRNA + S-adenosyl-L-homocysteine + H(+). It catalyses the reaction uridine(341) in tmRNA + S-adenosyl-L-methionine = 5-methyluridine(341) in tmRNA + S-adenosyl-L-homocysteine + H(+). Its function is as follows. Dual-specificity methyltransferase that catalyzes the formation of 5-methyluridine at position 54 (m5U54) in all tRNAs, and that of position 341 (m5U341) in tmRNA (transfer-mRNA). The sequence is that of tRNA/tmRNA (uracil-C(5))-methyltransferase from Psychromonas ingrahamii (strain DSM 17664 / CCUG 51855 / 37).